The following is a 200-amino-acid chain: ATP synthase subunit s, mitochondrial (200 aa).

Residues Met1–Tyr25 constitute a mitochondrion transit peptide. The tract at residues Met1 to Met61 is N-terminal domain. Residue Gly59 coordinates Mg(2+). 4 LRR repeats span residues Val62–Ile87, Gln88–Leu116, Cys117–Leu141, and Glu142–Leu173. Position 93 (Thr93) interacts with Mg(2+).

The protein belongs to the ATP synthase subunit s family. As to quaternary structure, homotetramer. Associates with ATP synthase.

Its subcellular location is the mitochondrion. It is found in the mitochondrion inner membrane. Involved in regulation of mitochondrial membrane ATP synthase. Necessary for H(+) conduction of ATP synthase. Facilitates energy-driven catalysis of ATP synthesis by blocking a proton leak through an alternative proton exit pathway. This Pongo abelii (Sumatran orangutan) protein is ATP synthase subunit s, mitochondrial (DMAC2L).